The sequence spans 196 residues: MSDKATDIANLLAPTVVSLGLELLGVEYLPAPGGATLRLYIDVPLAEQPERIINVDDCERVSREVSAQMDVEDPISGNYTLEVSSPGVDRPLFNLEQFGRHLGESAKVTLKLPQDNRRRLQGRIEAIDEAAGAITFIVDKAEVVVSADNIDKARIMPDWVALGLAPSKPTGPAPKRPKPKTNSSSNEPAAKKPRAE.

A disordered region spans residues 163 to 196 (GLAPSKPTGPAPKRPKPKTNSSSNEPAAKKPRAE).

Belongs to the RimP family.

The protein resides in the cytoplasm. Its function is as follows. Required for maturation of 30S ribosomal subunits. This Stenotrophomonas maltophilia (strain R551-3) protein is Ribosome maturation factor RimP.